A 799-amino-acid chain; its full sequence is Heat shock protein 90-6, mitochondrial (799 aa).

Residues 1 to 48 (MIRLSKRSVSTLLRSGNQSFRIAAAASTSRSSPSATDVKRSDTESRWY) constitute a mitochondrion transit peptide. Low complexity predominate over residues 23-35 (AAAASTSRSSPSA). A disordered region spans residues 23-61 (AAAASTSRSSPSATDVKRSDTESRWYSSLTNGQSKNSGS). The span at 46 to 61 (RWYSSLTNGQSKNSGS) shows a compositional bias: polar residues. ATP-binding positions include glutamate 124, asparagine 128, aspartate 170, methionine 175, 190–191 (SG), 214–219 (QFGVGF), and threonine 269. A disordered region spans residues 314–337 (EVEVEDDPTETKKDDQDDQTEKKK). Residues 322-334 (TETKKDDQDDQTE) are compositionally biased toward basic and acidic residues. Arginine 464 is an ATP binding site. The segment covering 766–777 (SPEVQPQQQQMA) has biased composition (polar residues). The segment at 766–799 (SPEVQPQQQQMAHSHDAETFEAEVVEPVEVDGKK) is disordered. Acidic residues predominate over residues 784-799 (TFEAEVVEPVEVDGKK).

It belongs to the heat shock protein 90 family. Interacts with P23-1.

It is found in the mitochondrion. Functionally, molecular chaperone which stabilizes unfolding protein intermediates and functions as a folding molecular chaperone that assists the non-covalent folding of proteins in an ATP-dependent manner. This Arabidopsis thaliana (Mouse-ear cress) protein is Heat shock protein 90-6, mitochondrial.